The primary structure comprises 248 residues: ATP synthase subunit a, chloroplastic (248 aa).

5 helical membrane passes run 37-57 (AQVL…AVLA), 96-116 (VPFI…GALF), 135-155 (INTT…AGLH), 200-220 (LVVA…MMFL), and 221-241 (GLFT…AYIG).

The protein belongs to the ATPase A chain family. F-type ATPases have 2 components, CF(1) - the catalytic core - and CF(0) - the membrane proton channel. CF(1) has five subunits: alpha(3), beta(3), gamma(1), delta(1), epsilon(1). CF(0) has four main subunits: a, b, b' and c.

It is found in the plastid. It localises to the chloroplast thylakoid membrane. Its function is as follows. Key component of the proton channel; it plays a direct role in the translocation of protons across the membrane. The chain is ATP synthase subunit a, chloroplastic from Marchantia polymorpha (Common liverwort).